The following is a 66-amino-acid chain: Conotoxin Cl14.1b (66 aa).

Positions 1–19 are cleaved as a signal peptide; sequence MNVTVMFLVLLLTMPLTDG. The propeptide occupies 20-47; the sequence is FNIRAINGGELFGLVQRDAGNALDHGFY.

This sequence belongs to the conotoxin L superfamily. In terms of processing, contains 2 disulfide bonds. As to expression, expressed by the venom duct.

It is found in the secreted. The chain is Conotoxin Cl14.1b from Californiconus californicus (California cone).